Here is a 181-residue protein sequence, read N- to C-terminus: UPF0340 protein OB2986 (181 aa).

Belongs to the UPF0340 family.

This Oceanobacillus iheyensis (strain DSM 14371 / CIP 107618 / JCM 11309 / KCTC 3954 / HTE831) protein is UPF0340 protein OB2986.